Reading from the N-terminus, the 800-residue chain is Mitogen-activated protein kinase kinase kinase 20 (800 aa).

Serine 2 is subject to N-acetylserine. Serine 2, serine 3, and serine 7 each carry phosphoserine; by autocatalysis. One can recognise a Protein kinase domain in the interval 16–277 (LQFFENCGGG…SLPDKCNSFL (262 aa)). Residues 22-30 (CGGGSFGSV) and lysine 45 contribute to the ATP site. The active-site Proton acceptor is aspartate 133. Threonine 161 is subject to Phosphothreonine; by autocatalysis. Residue serine 165 is modified to Phosphoserine; by autocatalysis. Phosphoserine is present on serine 275. Positions 287–308 (IEATLERLKKLERDLSFKEQEL) are leucine-zipper. The residue at position 302 (serine 302) is a Phosphoserine; by autocatalysis. A phosphoserine mark is found at tryptophan 339, glutamate 429, lysine 434, aspartate 454, and serine 567. One can recognise an SAM domain in the interval 339–410 (WTEDDVYCWV…KSAIEKLTHD (72 aa)). Threonine 586 carries the phosphothreonine; by autocatalysis modification. Serine 587 is modified (phosphoserine; by autocatalysis). 2 positions are modified to phosphoserine: serine 593 and serine 599. Threonine 628 is subject to Phosphothreonine. Phosphoserine is present on residues serine 633, serine 637, and serine 648. Serine 649 and serine 660 each carry phosphoserine; by autocatalysis. Residues 652 to 666 (LNSRDSGFSSGNTDT) show a composition bias toward polar residues. Positions 652 to 800 (LNSRDSGFSS…RGDHRGWRNF (149 aa)) are disordered. Threonine 664 is subject to Phosphothreonine; by autocatalysis. Residues 667 to 678 (SSERGRYSDRSR) show a composition bias toward basic and acidic residues. The interval 670 to 713 (RGRYSDRSRNKYGRGSISLNSSPRGRYSGKSQHSTPSRGRYPGK) is sensing domain (S). Serine 685 is modified (phosphoserine). Polar residues-rich tracts occupy residues 686–706 (ISLN…STPS) and 717–726 (VSQSALNPHQ). Phosphoserine; by autocatalysis occurs at positions 718 and 720. Phosphoserine is present on residues serine 727 and serine 733. Residues 728–738 (PDFKRSPRDLH) show a composition bias toward basic and acidic residues. Phosphothreonine; by autocatalysis is present on threonine 742. Basic and acidic residues-rich tracts occupy residues 750–763 (PETD…DSKV) and 785–800 (TNKE…WRNF). Positions 774 to 800 (RKKPHRPSPAKTNKERARGDHRGWRNF) are C-terminal domain (CTD).

The protein belongs to the protein kinase superfamily. STE Ser/Thr protein kinase family. MAP kinase kinase kinase subfamily. In terms of assembly, homodimer. Interacts with ZNF33A. Component of a signaling complex containing at least AKAP13, PKN1, MAPK14, MAP3K20 and MAP2K3. Within this complex, AKAP13 interacts directly with PKN1, which in turn recruits MAPK14, MAP2K3 and MAP3K20. Interacts with EIF2AK4/GCN2; promoting EIF2AK4/GCN2 kinase activity. As to quaternary structure, interacts with isoform ZAKbeta. Interacts with isoform ZAKalpha. Mg(2+) is required as a cofactor. In terms of processing, activated by phosphorylation by PKN1, followed by autophosphorylation on Thr-161 and Ser-165. Autophosphorylation in response to ribotoxic stress promotes dissociation from colliding ribosomes and activation. In terms of tissue distribution, ubiquitously expressed. Isoform ZAKbeta is the predominant form in all tissues examined, except for liver, in which isoform ZAKalpha is more highly expressed.

It is found in the cytoplasm. It localises to the nucleus. It catalyses the reaction L-seryl-[protein] + ATP = O-phospho-L-seryl-[protein] + ADP + H(+). The enzyme catalyses L-threonyl-[protein] + ATP = O-phospho-L-threonyl-[protein] + ADP + H(+). Its activity is regulated as follows. Activated in response to stress, such as ribosomal stress, osmotic shock and ionizing radiation. Activated by phosphorylation by PKN1, followed by autophosphorylation on Thr-161 and Ser-165. Inhibited by nilotinib, sorafenib, dabrafenib, rebastinib and vemurafenib. Selectively inhibited by N-(3)-((1H-Pyrazolo[3,4-b]pyridin-5-yl)ethynyl)benzenesulfonamide compound 3h. Selectively inhibited by 1,2,3-triazole benzenesulfonamides. Stress-activated component of a protein kinase signal transduction cascade that promotes programmed cell death in response to various stress, such as ribosomal stress, osmotic shock and ionizing radiation. Acts by catalyzing phosphorylation of MAP kinase kinases, leading to activation of the JNK (MAPK8/JNK1, MAPK9/JNK2 and/or MAPK10/JNK3) and MAP kinase p38 (MAPK11, MAPK12, MAPK13 and/or MAPK14) pathways. Activates JNK through phosphorylation of MAP2K4/MKK4 and MAP2K7/MKK7, and MAP kinase p38 gamma (MAPK12) via phosphorylation of MAP2K3/MKK3 and MAP2K6/MKK6. Involved in stress associated with adrenergic stimulation: contributes to cardiac decompensation during periods of acute cardiac stress. May be involved in regulation of S and G2 cell cycle checkpoint by mediating phosphorylation of CHEK2. Its function is as follows. Key component of the stress-activated protein kinase signaling cascade in response to ribotoxic stress or UV-B irradiation. Acts as the proximal sensor of ribosome collisions during the ribotoxic stress response (RSR): directly binds to the ribosome by inserting its flexible C-terminus into the ribosomal intersubunit space, thereby acting as a sentinel for colliding ribosomes. Upon ribosome collisions, activates either the stress-activated protein kinase signal transduction cascade or the integrated stress response (ISR), leading to programmed cell death or cell survival, respectively. Dangerous levels of ribosome collisions trigger the autophosphorylation and activation of MAP3K20, which dissociates from colliding ribosomes and phosphorylates MAP kinase kinases, leading to activation of the JNK and MAP kinase p38 pathways that promote programmed cell death. Less dangerous levels of ribosome collisions trigger the integrated stress response (ISR): MAP3K20 activates EIF2AK4/GCN2 independently of its protein-kinase activity, promoting EIF2AK4/GCN2-mediated phosphorylation of EIF2S1/eIF-2-alpha. Also part of the stress-activated protein kinase signaling cascade triggering the NLRP1 inflammasome in response to UV-B irradiation: ribosome collisions activate MAP3K20, which directly phosphorylates NLRP1, leading to activation of the NLRP1 inflammasome and subsequent pyroptosis. NLRP1 is also phosphorylated by MAP kinase p38 downstream of MAP3K20. Also acts as a histone kinase by phosphorylating histone H3 at 'Ser-28' (H3S28ph). Functionally, isoform that lacks the C-terminal region that mediates ribosome-binding: does not act as a sensor of ribosome collisions in response to ribotoxic stress. May act as an antagonist of isoform ZAKalpha: interacts with isoform ZAKalpha, leading to decrease the expression of isoform ZAKalpha. This Homo sapiens (Human) protein is Mitogen-activated protein kinase kinase kinase 20.